The primary structure comprises 199 residues: Recombination protein RecR (199 aa).

Residues 57 to 72 (CEICGNMDTKNICHIC) form a C4-type zinc finger. In terms of domain architecture, Toprim spans 80–175 (STIAIVETVA…KISRLASGIP (96 aa)).

Belongs to the RecR family.

Its function is as follows. May play a role in DNA repair. It seems to be involved in an RecBC-independent recombinational process of DNA repair. It may act with RecF and RecO. The protein is Recombination protein RecR of Rickettsia typhi (strain ATCC VR-144 / Wilmington).